The following is a 77-amino-acid chain: Acyl carrier protein (77 aa).

The Carrier domain maps to 2-77 (SNIEERVKKI…AAIDYVTANQ (76 aa)). O-(pantetheine 4'-phosphoryl)serine is present on S37.

Belongs to the acyl carrier protein (ACP) family. Post-translationally, 4'-phosphopantetheine is transferred from CoA to a specific serine of apo-ACP by AcpS. This modification is essential for activity because fatty acids are bound in thioester linkage to the sulfhydryl of the prosthetic group.

The protein localises to the cytoplasm. It participates in lipid metabolism; fatty acid biosynthesis. Functionally, carrier of the growing fatty acid chain in fatty acid biosynthesis. This Colwellia psychrerythraea (strain 34H / ATCC BAA-681) (Vibrio psychroerythus) protein is Acyl carrier protein.